Reading from the N-terminus, the 401-residue chain is Imidazolonepropionase (401 aa).

His66 and His68 together coordinate Fe(3+). Residues His66 and His68 each contribute to the Zn(2+) site. The 4-imidazolone-5-propanoate site is built by Arg75, Tyr138, and His171. Tyr138 is a binding site for N-formimidoyl-L-glutamate. Residue His236 coordinates Fe(3+). His236 provides a ligand contact to Zn(2+). Position 239 (Gln239) interacts with 4-imidazolone-5-propanoate. Position 311 (Asp311) interacts with Fe(3+). Asp311 lines the Zn(2+) pocket. The N-formimidoyl-L-glutamate site is built by Asn313 and Gly315. Thr316 is a binding site for 4-imidazolone-5-propanoate.

It belongs to the metallo-dependent hydrolases superfamily. HutI family. Zn(2+) serves as cofactor. The cofactor is Fe(3+).

It localises to the cytoplasm. It catalyses the reaction 4-imidazolone-5-propanoate + H2O = N-formimidoyl-L-glutamate. Its pathway is amino-acid degradation; L-histidine degradation into L-glutamate; N-formimidoyl-L-glutamate from L-histidine: step 3/3. Its function is as follows. Catalyzes the hydrolytic cleavage of the carbon-nitrogen bond in imidazolone-5-propanoate to yield N-formimidoyl-L-glutamate. It is the third step in the universal histidine degradation pathway. This is Imidazolonepropionase from Acinetobacter baumannii (strain ATCC 17978 / DSM 105126 / CIP 53.77 / LMG 1025 / NCDC KC755 / 5377).